Here is a 246-residue protein sequence, read N- to C-terminus: N-alpha-acetyltransferase 11 (246 aa).

Residues 1-58 (MNIRNARPEDLMNMQHCNLLCLPENYQMKYYFYHGLSWPQLSYIAEDEDGKIVGYVLA) are interaction with NAA15. The N-acetyltransferase domain occupies 1–152 (MNIRNARPED…DAYAMKRDLA (152 aa)). The segment at 175 to 246 (EENQEAQDST…DSSEYLDSTS (72 aa)) is disordered. The segment covering 230 to 246 (SHSTDVQDSSEYLDSTS) has biased composition (polar residues).

The protein belongs to the acetyltransferase family. ARD1 subfamily. In terms of assembly, component of the N-terminal acetyltransferase A (NatA) complex composed of NAA11 and NAA15. Interacts with HIF1A.

The protein localises to the cytoplasm. It localises to the nucleus. It carries out the reaction N-terminal glycyl-[protein] + acetyl-CoA = N-terminal N(alpha)-acetylglycyl-[protein] + CoA + H(+). The enzyme catalyses N-terminal L-alanyl-[protein] + acetyl-CoA = N-terminal N(alpha)-acetyl-L-alanyl-[protein] + CoA + H(+). It catalyses the reaction N-terminal L-seryl-[protein] + acetyl-CoA = N-terminal N(alpha)-acetyl-L-seryl-[protein] + CoA + H(+). The catalysed reaction is N-terminal L-valyl-[protein] + acetyl-CoA = N-terminal N(alpha)-acetyl-L-valyl-[protein] + CoA + H(+). It carries out the reaction N-terminal L-cysteinyl-[protein] + acetyl-CoA = N-terminal N(alpha)-acetyl-L-cysteinyl-[protein] + CoA + H(+). The enzyme catalyses N-terminal L-threonyl-[protein] + acetyl-CoA = N-terminal N(alpha)-acetyl-L-threonyl-[protein] + CoA + H(+). Functionally, displays alpha (N-terminal) acetyltransferase activity. Proposed alternative catalytic subunit of the N-terminal acetyltransferase A (NatA) complex. This is N-alpha-acetyltransferase 11 (Naa11) from Rattus norvegicus (Rat).